A 377-amino-acid polypeptide reads, in one-letter code: Anhydro-N-acetylmuramic acid kinase (377 aa).

Position 18 to 25 (18 to 25) interacts with ATP; sequence GTSADGID.

This sequence belongs to the anhydro-N-acetylmuramic acid kinase family.

It catalyses the reaction 1,6-anhydro-N-acetyl-beta-muramate + ATP + H2O = N-acetyl-D-muramate 6-phosphate + ADP + H(+). The protein operates within amino-sugar metabolism; 1,6-anhydro-N-acetylmuramate degradation. Its pathway is cell wall biogenesis; peptidoglycan recycling. Its function is as follows. Catalyzes the specific phosphorylation of 1,6-anhydro-N-acetylmuramic acid (anhMurNAc) with the simultaneous cleavage of the 1,6-anhydro ring, generating MurNAc-6-P. Is required for the utilization of anhMurNAc either imported from the medium or derived from its own cell wall murein, and thus plays a role in cell wall recycling. This Xanthomonas oryzae pv. oryzae (strain MAFF 311018) protein is Anhydro-N-acetylmuramic acid kinase.